Consider the following 378-residue polypeptide: Probable E3 ubiquitin-protein ligase LUL3 (378 aa).

Positions Met1–His21 are enriched in basic residues. The segment at Met1–Tyr79 is disordered. Residue Gly2 is the site of N-myristoyl glycine attachment. Composition is skewed to pro residues over residues Asp29–Gln38 and Ser55–Ser72. The segment at Phe164–Gln283 is DAR2 domain. An RING-type; atypical zinc finger spans residues Cys321 to Arg360.

The protein belongs to the RING-type zinc finger family. LOG2 subfamily. Post-translationally, myristoylated (in vitro).

The catalysed reaction is S-ubiquitinyl-[E2 ubiquitin-conjugating enzyme]-L-cysteine + [acceptor protein]-L-lysine = [E2 ubiquitin-conjugating enzyme]-L-cysteine + N(6)-ubiquitinyl-[acceptor protein]-L-lysine.. Its pathway is protein modification; protein ubiquitination. In terms of biological role, acts as an E3 ubiquitin-protein ligase, or as part of E3 complex, which accepts ubiquitin from specific E2 ubiquitin-conjugating enzymes and then transfers it to substrates (in vitro). This is Probable E3 ubiquitin-protein ligase LUL3 (LUL3) from Arabidopsis thaliana (Mouse-ear cress).